Reading from the N-terminus, the 276-residue chain is Probable endonuclease 4 (276 aa).

Zn(2+) contacts are provided by His-70, His-108, Glu-144, Asp-177, His-180, His-211, Asp-224, His-226, and Glu-256.

Belongs to the AP endonuclease 2 family. The cofactor is Zn(2+).

It catalyses the reaction Endonucleolytic cleavage to 5'-phosphooligonucleotide end-products.. In terms of biological role, endonuclease IV plays a role in DNA repair. It cleaves phosphodiester bonds at apurinic or apyrimidinic (AP) sites, generating a 3'-hydroxyl group and a 5'-terminal sugar phosphate. The polypeptide is Probable endonuclease 4 (Metamycoplasma arthritidis (strain 158L3-1) (Mycoplasma arthritidis)).